Reading from the N-terminus, the 271-residue chain is Sulfur carrier protein FdhD (271 aa).

Cys-114 acts as the Cysteine persulfide intermediate in catalysis.

This sequence belongs to the FdhD family.

The protein resides in the cytoplasm. Functionally, required for formate dehydrogenase (FDH) activity. Acts as a sulfur carrier protein that transfers sulfur from IscS to the molybdenum cofactor prior to its insertion into FDH. This chain is Sulfur carrier protein FdhD, found in Agrobacterium fabrum (strain C58 / ATCC 33970) (Agrobacterium tumefaciens (strain C58)).